The following is a 361-amino-acid chain: Histidinol-phosphate aminotransferase (361 aa).

An N6-(pyridoxal phosphate)lysine modification is found at Lys-221.

Belongs to the class-II pyridoxal-phosphate-dependent aminotransferase family. Histidinol-phosphate aminotransferase subfamily. Homodimer. The cofactor is pyridoxal 5'-phosphate.

The enzyme catalyses L-histidinol phosphate + 2-oxoglutarate = 3-(imidazol-4-yl)-2-oxopropyl phosphate + L-glutamate. Its pathway is amino-acid biosynthesis; L-histidine biosynthesis; L-histidine from 5-phospho-alpha-D-ribose 1-diphosphate: step 7/9. The polypeptide is Histidinol-phosphate aminotransferase (Symbiobacterium thermophilum (strain DSM 24528 / JCM 14929 / IAM 14863 / T)).